The primary structure comprises 118 residues: V-type proton ATPase subunit G 1 (118 aa).

A2 is subject to N-acetylalanine. The interval 19–42 (AEKVSEARKRKNRRLKQAKEEAQA) is disordered.

Belongs to the V-ATPase G subunit family. V-ATPase is a heteromultimeric enzyme made up of two complexes: the ATP-hydrolytic V1 complex and the proton translocation V0 complex. The V1 complex consists of three catalytic AB heterodimers that form a heterohexamer, three peripheral stalks each consisting of EG heterodimers, one central rotor including subunits D and F, and the regulatory subunits C and H. The proton translocation complex V0 consists of the proton transport subunit a, a ring of proteolipid subunits c9c'', rotary subunit d, subunits e and f, and the accessory subunits ATP6AP1/Ac45 and ATP6AP2/PRR. In terms of tissue distribution, brain, heart, kidney and spleen.

It is found in the apical cell membrane. Functionally, subunit of the V1 complex of vacuolar(H+)-ATPase (V-ATPase), a multisubunit enzyme composed of a peripheral complex (V1) that hydrolyzes ATP and a membrane integral complex (V0) that translocates protons. V-ATPase is responsible for acidifying and maintaining the pH of intracellular compartments and in some cell types, is targeted to the plasma membrane, where it is responsible for acidifying the extracellular environment. In aerobic conditions, involved in intracellular iron homeostasis, thus triggering the activity of Fe(2+) prolyl hydroxylase (PHD) enzymes, and leading to HIF1A hydroxylation and subsequent proteasomal degradation. The chain is V-type proton ATPase subunit G 1 (ATP6V1G1) from Bos taurus (Bovine).